The following is a 174-amino-acid chain: Large ribosomal subunit protein uL10 (174 aa).

This sequence belongs to the universal ribosomal protein uL10 family. As to quaternary structure, part of the ribosomal stalk of the 50S ribosomal subunit. The N-terminus interacts with L11 and the large rRNA to form the base of the stalk. The C-terminus forms an elongated spine to which L12 dimers bind in a sequential fashion forming a multimeric L10(L12)X complex.

Forms part of the ribosomal stalk, playing a central role in the interaction of the ribosome with GTP-bound translation factors. This chain is Large ribosomal subunit protein uL10, found in Syntrophus aciditrophicus (strain SB).